Here is a 3767-residue protein sequence, read N- to C-terminus: Transmembrane cell adhesion receptor mua-3 (3767 aa).

Positions 1–24 (MQAGISIFFLFLHIPIFFVNCSNS) are cleaved as a signal peptide. Residues 25–3417 (TSCVAREEFQ…CQVAPSNASL (3393 aa)) are Extracellular-facing. Positions 26–63 (SCVAREEFQCKMDDSCISMKKWQDGVDDCYDGSDEVCL) constitute an LDL-receptor class A 1 domain. 10 disulfide bridges follow: C27–C41, C35–C54, C62–C76, C69–C89, C97–C110, C104–C123, C131–C144, C138–C157, C165–C179, and C172–C192. 3 consecutive LDL-receptor class A domains span residues 96-132 (GCPA…EPCA), 133-166 (QNQF…EECT), and 167-209 (TSQF…ANCT). N-linked (GlcNAc...) asparagine glycans are attached at residues N201 and N207. EGF-like domains are found at residues 225-268 (KLKF…DKCI), 375-416 (NRDD…GTCR), 418-466 (LIDE…RKCR), 468-517 (LINE…RNCT), 519-566 (AINE…RKCV), 614-663 (RANP…RKCV), 665-713 (AVDE…RSCK), 714-760 (KADM…RVCR), 762-810 (VVNE…KNCV), 816-860 (DPPE…GRCV), 861-908 (VINE…RICR), 910-961 (RVNE…RRCI), 963-1012 (AVNE…RICT), 1029-1070 (TDDG…GSCR), 1071-1118 (VYSA…RICK), 1120-1168 (LINE…RQCT), and 1170-1219 (SNNE…RVCT). Intrachain disulfides connect C229–C243, C235–C252, C254–C267, C381–C392, C386–C402, C404–C415, C422–C435, C429–C444, C446–C465, C472–C486, C480–C495, C497–C516, C523–C536, C530–C545, C547–C565, C618–C632, C626–C642, C644–C662, C669–C682, C676–C691, C693–C712, C718–C729, C723–C738, C740–C759, C766–C779, C773–C788, C790–C809, C820–C836, C828–C845, C847–C859, C865–C879, C873–C888, C890–C907, C914–C930, C924–C939, C941–C960, C967–C981, C975–C990, C992–C1011, C1033–C1046, C1040–C1055, C1057–C1069, C1075–C1087, C1081–C1096, C1098–C1117, C1124–C1137, C1131–C1146, C1148–C1167, C1174–C1188, C1182–C1197, and C1199–C1218. N-linked (GlcNAc...) asparagine glycosylation occurs at N383. An N-linked (GlcNAc...) asparagine glycan is attached at N515. The region spanning 1230–1406 (DLVFLIDGSG…DLDTRLRSMI (177 aa)) is the VWFA domain. The N-linked (GlcNAc...) asparagine glycan is linked to N1350. EGF-like domains lie at 1421–1466 (SEDV…RVCG), 1466–1510 (GGDL…GFCV), 1521–1562 (HDAN…GQCA), 1563–1608 (YPGS…DICL), 1608–1656 (LKNE…RVCV), 1658–1706 (LQNE…MVCK), 1708–1755 (LVNE…RRCE), 1759–1807 (TNDK…RLCI), 1809–1860 (VIPE…RLCK), 1862–1911 (LQNE…RKCK), 1913–1961 (LINE…RRCL), 1963–2011 (RINE…RICR), 2014–2062 (LVDE…RLCQ), 2068–2112 (PPPE…GSCS), 2113–2160 (IINE…RMCK), 2162–2208 (MVNE…RICK), 2210–2258 (LTNE…RACR), 2260–2308 (LVNE…RVCL), 2310–2358 (FINE…RVCV), 2360–2408 (LVDE…RVCS), 2409–2455 (APEV…RVCV), 2456–2504 (RNNA…RVCE), 2513–2563 (PRHP…RLCV), 2565–2616 (TEPV…RICK), 2618–2666 (LINE…RICS), 2668–2714 (SVNE…HRCS), 2716–2763 (MINE…RICR), 2763–2811 (RLNE…RICI), and 2833–2872 (REFP…GKCQ). Cystine bridges form between C1425/C1441, C1433/C1450, C1452/C1465, C1470/C1484, C1478/C1494, C1496/C1509, C1525/C1538, C1532/C1547, C1549/C1561, C1567/C1583, C1575/C1592, C1594/C1607, C1612/C1625, C1619/C1634, C1636/C1655, C1662/C1675, C1669/C1684, C1686/C1705, C1712/C1726, C1720/C1735, C1737/C1754, C1763/C1776, C1770/C1786, C1788/C1806, C1813/C1829, C1821/C1838, C1840/C1859, C1866/C1880, C1873/C1889, C1891/C1910, C1917/C1930, C1924/C1939, C1941/C1960, C1967/C1980, C1974/C1989, C1991/C2010, C2018/C2031, C2025/C2040, C2042/C2061, C2072/C2088, C2080/C2097, C2099/C2111, C2117/C2131, C2125/C2140, C2142/C2159, C2166/C2180, C2174/C2189, C2191/C2207, C2214/C2228, C2222/C2237, C2239/C2257, C2264/C2278, C2272/C2287, C2289/C2307, C2314/C2327, C2321/C2336, C2338/C2357, C2364/C2377, C2371/C2386, C2388/C2407, C2413/C2425, C2419/C2435, C2437/C2454, C2460/C2474, C2468/C2483, and C2485/C2503. The disordered stretch occupies residues 2492–2521 (RSPDSSQRGRVCEPPPPPSPPPRHPCQDPE). The segment covering 2504–2515 (EPPPPPSPPPRH) has biased composition (pro residues). 21 cysteine pairs are disulfide-bonded: C2517–C2531, C2525–C2541, C2543–C2562, C2569–C2583, C2577–C2594, C2596–C2615, C2622–C2636, C2630–C2645, C2647–C2665, C2672–C2686, C2680–C2695, C2697–C2713, C2720–C2734, C2728–C2743, C2745–C2762, C2767–C2781, C2775–C2790, C2792–C2810, C2837–C2850, C2842–C2856, and C2858–C2871. The 127-residue stretch at 2873 to 2999 (EVQETPFELR…GSLRVASDTD (127 aa)) folds into the SEA 1 domain. Residue N2944 is glycosylated (N-linked (GlcNAc...) asparagine). An EGF-like 47 domain is found at 3009–3048 (EWGNCGGMSCKEHLKEVCIAGHICGCPDGMKRRDANSECR). 3 cysteine pairs are disulfide-bonded: C3013/C3026, C3018/C3032, and C3034/C3047. Residues 3049-3174 (VVESWNVPLW…SELYLNPTQP (126 aa)) enclose the SEA 2 domain. Residues N3120 and N3130 are each glycosylated (N-linked (GlcNAc...) asparagine). EGF-like domains follow at residues 3176 to 3220 (PFNP…KKCL), 3224 to 3272 (GFNE…SLCV), and 3272 to 3324 (VLDY…TLCM). 15 disulfides stabilise this stretch: C3180/C3191, C3185/C3201, C3203/C3219, C3228/C3242, C3236/C3251, C3253/C3271, C3276/C3288, C3282/C3297, C3299/C3323, C3332/C3345, C3339/C3354, C3356/C3372, C3377/C3386, C3380/C3397, and C3399/C3408. N3285 is a glycosylation site (N-linked (GlcNAc...) asparagine). The EGF-like 51; calcium-binding domain occupies 3328–3373 (DVDECALGLNNCSGVAHCIDRAVGYTCKCPDGYIDGNPDEPGRVCG). N3337 is a glycosylation site (N-linked (GlcNAc...) asparagine; atypical). N-linked (GlcNAc...) asparagine glycosylation occurs at N3338. One can recognise an EGF-like 52 domain in the interval 3373 to 3409 (GALLCDLCNAHGDCVHNTATNNITCVCTDGWTGPQCQ). N3394 is a glycosylation site (N-linked (GlcNAc...) asparagine). N3414 carries an N-linked (GlcNAc...) asparagine glycan. A helical transmembrane segment spans residues 3418–3438 (VLLILLALLFLLLTLCCLLYF). Topologically, residues 3439–3767 (CTKCHCFKGR…SQTSTHVTKK (329 aa)) are cytoplasmic. The interval 3582–3729 (TTTTDEQGNT…EEDVEHSVGD (148 aa)) is disordered. A compositionally biased stretch (polar residues) spans 3588–3597 (QGNTIVTTTE). A compositionally biased stretch (low complexity) spans 3630–3665 (QSQSQQQQSMSQGMSQSMSQHATSAGYSSSGMESSA). Over residues 3675–3684 (HTGERERGGS) the composition is skewed to basic and acidic residues. The span at 3690–3702 (IGRARGMAAASSG) shows a compositional bias: low complexity.

Expressed in the hypodermis at the sites of muscle contact, in striated muscles including body wall muscles, the anal sphincter muscles and the junctions between the anal sphincter muscle and rectal cuticle. Also expressed in non-muscle cells including the excretory duct cell and pore cells.

Its subcellular location is the cell membrane. It localises to the cell junction. It is found in the hemidesmosome. Its function is as follows. Involved in cell adhesion and required for organ positioning and attachment. At the hypodermal surface, required for attachment of the hypdermermis to the basal cuticle in postembryonic development, possibly through intermediate filaments of the cytoskeleton. This is Transmembrane cell adhesion receptor mua-3 from Caenorhabditis elegans.